The sequence spans 185 residues: uncharacterized protein (185 aa).

The 121-residue stretch at 17 to 137 (GKSSIMNALF…QKPIIVVINK (121 aa)) folds into the G domain.

This is an uncharacterized protein from Methanocaldococcus jannaschii (strain ATCC 43067 / DSM 2661 / JAL-1 / JCM 10045 / NBRC 100440) (Methanococcus jannaschii).